The primary structure comprises 257 residues: Snake venom serine protease KN11 (257 aa).

A signal peptide spans 1 to 18 (MVLIRVLANLLILQLSYA). The propeptide occupies 19–24 (QKSSEL). Residues 25–248 (VTGGHPCNIN…HLDWIKSIIA (224 aa)) form the Peptidase S1 domain. 6 cysteine pairs are disulfide-bonded: Cys-31–Cys-162, Cys-49–Cys-65, Cys-97–Cys-255, Cys-141–Cys-209, Cys-173–Cys-188, and Cys-199–Cys-224. Catalysis depends on charge relay system residues His-64 and Asp-109. N-linked (GlcNAc...) asparagine glycosylation is found at Asn-120 and Asn-121. Ser-203 (charge relay system) is an active-site residue.

Belongs to the peptidase S1 family. Snake venom subfamily. Monomer. As to expression, expressed by the venom gland.

It is found in the secreted. Its function is as follows. Snake venom serine protease that may act in the hemostasis system of the prey. In Trimeresurus stejnegeri (Chinese green tree viper), this protein is Snake venom serine protease KN11.